The sequence spans 436 residues: Glutamate-1-semialdehyde 2,1-aminomutase 2 (436 aa).

The residue at position 271 (K271) is an N6-(pyridoxal phosphate)lysine.

The protein belongs to the class-III pyridoxal-phosphate-dependent aminotransferase family. HemL subfamily. In terms of assembly, homodimer. It depends on pyridoxal 5'-phosphate as a cofactor.

The protein resides in the cytoplasm. The enzyme catalyses (S)-4-amino-5-oxopentanoate = 5-aminolevulinate. It participates in porphyrin-containing compound metabolism; protoporphyrin-IX biosynthesis; 5-aminolevulinate from L-glutamyl-tRNA(Glu): step 2/2. The polypeptide is Glutamate-1-semialdehyde 2,1-aminomutase 2 (Exiguobacterium sibiricum (strain DSM 17290 / CCUG 55495 / CIP 109462 / JCM 13490 / 255-15)).